A 211-amino-acid polypeptide reads, in one-letter code: Recombination protein RecR (211 aa).

The C4-type zinc-finger motif lies at 70–85; that stretch reads CRECFLITDREVCPIC. The Toprim domain maps to 93–190; it reads KFICVVEESQ…KITRTAYGFQ (98 aa).

The protein belongs to the RecR family.

May play a role in DNA repair. It seems to be involved in an RecBC-independent recombinational process of DNA repair. It may act with RecF and RecO. This chain is Recombination protein RecR, found in Aquifex aeolicus (strain VF5).